The sequence spans 577 residues: Beta-fructofuranosidase, insoluble isoenzyme 1 (577 aa).

The first 22 residues, 1–22, serve as a signal peptide directing secretion; that stretch reads MGTRLLALAPWLLLLLLQLAGA. Asp63 is an active-site residue. Residues Asn158, Asn183, and Asn333 are each glycosylated (N-linked (GlcNAc...) asparagine).

The protein belongs to the glycosyl hydrolase 32 family. In terms of tissue distribution, expressed in roots, leaves and flowers. Weakly expressed in seeds.

The protein resides in the secreted. The protein localises to the extracellular space. It is found in the apoplast. It localises to the cell wall. The catalysed reaction is Hydrolysis of terminal non-reducing beta-D-fructofuranoside residues in beta-D-fructofuranosides.. May play a role in sucrose partitioning during seed development and in stress response. The protein is Beta-fructofuranosidase, insoluble isoenzyme 1 (CIN1) of Oryza sativa subsp. japonica (Rice).